Reading from the N-terminus, the 222-residue chain is Octanoyltransferase (222 aa).

Residues 35–214 form the BPL/LPL catalytic domain; sequence GTAPELIWLL…HLDGFLARLD (180 aa). Residues 73–80, 145–147, and 158–160 each bind substrate; these read RGGRYTYH, AIG, and GFS. The active-site Acyl-thioester intermediate is the C176.

The protein belongs to the LipB family.

Its subcellular location is the cytoplasm. The enzyme catalyses octanoyl-[ACP] + L-lysyl-[protein] = N(6)-octanoyl-L-lysyl-[protein] + holo-[ACP] + H(+). It participates in protein modification; protein lipoylation via endogenous pathway; protein N(6)-(lipoyl)lysine from octanoyl-[acyl-carrier-protein]: step 1/2. Catalyzes the transfer of endogenously produced octanoic acid from octanoyl-acyl-carrier-protein onto the lipoyl domains of lipoate-dependent enzymes. Lipoyl-ACP can also act as a substrate although octanoyl-ACP is likely to be the physiological substrate. The polypeptide is Octanoyltransferase (Novosphingobium aromaticivorans (strain ATCC 700278 / DSM 12444 / CCUG 56034 / CIP 105152 / NBRC 16084 / F199)).